Consider the following 424-residue polypeptide: Histidine--tRNA ligase (424 aa).

This sequence belongs to the class-II aminoacyl-tRNA synthetase family. Homodimer.

The protein localises to the cytoplasm. The catalysed reaction is tRNA(His) + L-histidine + ATP = L-histidyl-tRNA(His) + AMP + diphosphate + H(+). This Bacillus velezensis (strain DSM 23117 / BGSC 10A6 / LMG 26770 / FZB42) (Bacillus amyloliquefaciens subsp. plantarum) protein is Histidine--tRNA ligase.